Reading from the N-terminus, the 397-residue chain is Acetate kinase (397 aa).

Asn8 contributes to the Mg(2+) binding site. Position 15 (Lys15) interacts with ATP. Arg89 provides a ligand contact to substrate. Catalysis depends on Asp146, which acts as the Proton donor/acceptor. Residues 206–210, 281–283, and 329–333 each bind ATP; these read HLGNG, DLR, and GIGEN. Glu382 serves as a coordination point for Mg(2+).

Belongs to the acetokinase family. In terms of assembly, homodimer. It depends on Mg(2+) as a cofactor. Mn(2+) is required as a cofactor.

The protein resides in the cytoplasm. The catalysed reaction is acetate + ATP = acetyl phosphate + ADP. It participates in metabolic intermediate biosynthesis; acetyl-CoA biosynthesis; acetyl-CoA from acetate: step 1/2. Catalyzes the formation of acetyl phosphate from acetate and ATP. Can also catalyze the reverse reaction. This is Acetate kinase from Bacillus cytotoxicus (strain DSM 22905 / CIP 110041 / 391-98 / NVH 391-98).